An 802-amino-acid chain; its full sequence is Leucine--tRNA ligase (802 aa).

Positions 40–51 match the 'HIGH' region motif; sequence PYPSGAGLHVGH. Positions 576 to 580 match the 'KMSKS' region motif; sequence KMSKS. Lys-579 provides a ligand contact to ATP.

It belongs to the class-I aminoacyl-tRNA synthetase family.

Its subcellular location is the cytoplasm. The catalysed reaction is tRNA(Leu) + L-leucine + ATP = L-leucyl-tRNA(Leu) + AMP + diphosphate. This Bacillus cereus (strain B4264) protein is Leucine--tRNA ligase.